The sequence spans 431 residues: 5'-deoxyadenosine deaminase (431 aa).

Positions 65 and 67 each coordinate Zn(2+). Glutamate 94 and histidine 185 together coordinate substrate. Residue histidine 212 coordinates Zn(2+). The substrate site is built by glutamate 215 and aspartate 300. Aspartate 300 is a Zn(2+) binding site.

It belongs to the metallo-dependent hydrolases superfamily. MTA/SAH deaminase family. As to quaternary structure, homotetramer. The cofactor is Zn(2+).

It carries out the reaction 5'-deoxyadenosine + H2O + H(+) = 5'-deoxyinosine + NH4(+). The catalysed reaction is S-adenosyl-L-homocysteine + H2O + H(+) = S-inosyl-L-homocysteine + NH4(+). It catalyses the reaction S-methyl-5'-thioadenosine + H2O + H(+) = S-methyl-5'-thioinosine + NH4(+). The enzyme catalyses adenosine + H2O + H(+) = inosine + NH4(+). It participates in amino-acid biosynthesis; S-adenosyl-L-methionine biosynthesis. Functionally, catalyzes the deamination of three SAM-derived enzymatic products, namely 5'-deoxyadenosine, S-adenosyl-L-homocysteine, and 5'-methylthioadenosine, to produce the inosine analogs. Can also deaminate adenosine. The preferred substrate for this enzyme is 5'-deoxyadenosine, but all these substrates are efficiently deaminated. Likely functions in a S-adenosyl-L-methionine (SAM) recycling pathway from S-adenosyl-L-homocysteine (SAH) produced from SAM-dependent methylation reactions. May also be involved in the recycling of 5'-deoxyadenosine, whereupon the 5'-deoxyribose moiety of 5'-deoxyinosine is further metabolized to deoxyhexoses used for the biosynthesis of aromatic amino acids in methanogens. In Methanopyrus kandleri (strain AV19 / DSM 6324 / JCM 9639 / NBRC 100938), this protein is 5'-deoxyadenosine deaminase.